We begin with the raw amino-acid sequence, 1549 residues long: MPPKTSAAPPQSDESDSDFDDAPVKKPQKKTTKPVNRHKEGSKDPEEELQRAVNEKFDGSDGEDDDSDLFSLQLPSRPDFLTKPNRADRLMIRNVEVDNFKSYFGKASIGPFHKSFTSIIGPNGSGKSNLIDSLLFVFGFRASKIRSAKVSNLIHKSAGRNPDKCTVTIHFQRIVDIPGHYEVVKDSEFTISRTAFQNNSSSYAIDGRPATKNEVEARLRRVDIDIEHNRFLILQGEVEQIAMMKPVKTTKSETGMVEYLEDIIGTNRLEPFVKLFQRRVNRLTCDLSQQRIARDHARNSKVAMENPVRAAIEFLMKENEATTIHMKLEQRRRQRYLDKIAPKQAELDKMKEEMKSIAETLDTNKNEYKQSEEAQKVMIEERSKLDKNFDSLSKELSDLGTEETRRKEALKRHQANISKAEAEKEKEVKKRSNLEAAPEKAERKIAKCQEEVEQLLEIEKTANEEADKNLDEFEKRSEAPKEEQKKIQETWAQKSNEFNKVRGEARIAREDFEDLKKLANSGTDKLIELKKRLESSEESYAKEKDELDKLKPEFDSWNDKLKQLSTELPTLRNTARQKNQDLAKTRDRLETLRQQNSSCSSSNKVIQALMKEKEAGRIKSFHGRLGDLGVIDPKYEGAICTNFGARLNYLIVGKEEDAKNVINFLVANKLPRQTVQPLDKIKCDKRDLAPNPTNPLPAPRLIDLIDCDPVLKPAFYDMVRSAIVGDSTQEAQRMHRMPACRGVTVCTLEGSMIHPSGSFTGGGKTVKGLILTDKNKMAKQVTPEDKAAERDLAEKLGKLRDEADELKGQEHEMDGQLIEARRKVAEMSNRLSIVTSSVQSAAPAIETLKKTIANQEKEAAKVKVDAKTLEDKQKIVEELEKKRDELGEEAAKVKARQAEIQSKLDGIFKELVQCHRDEAKESLQKRQKLEKDIAKETANISNSGRNIAKCDENISRHDKDIEKMKKKCEELMEKAIDDEEVKSKKETVERFEKQIKKLQTKGEEMTKKQSELSAAETKLEGELKKCSEGIKELKESMLADRLKVEDIEKKLAALKVNRIPRFQFLIESSRPEDLEMQIDDKMPVVDENQSPEEVERQKKHMACVMSDAAYALEFEMRQKVLENTESYENVDGEDRVPVELLSDEKINEISSRDAEEMQMKLKVCEQQVEALKAKVDISSIKAYVDKVKQYNEQVIKLTIATEVHRKHNQELQRIKQMRLEEFHSAFEFIGKHLVAVFKMLTDGGDAKLEYIDKDDPFRQGISFMVRPAKKAWKQIQFLSGGEKTLSSLALIFALHMFRPTPFYVMDEIDAALDYRNVSIIAQYVRQKTENAQFIIISLRNNMFELANRLVGIYKVDGCTRNVAIDPLRVCEMAKQITDSLGQATCTLPDEVTQRFNETMSRQNKEMIAQEKQYPNFPSSNEISKAEKIVNVEGRVRKELIQTTRDVTSRPQSKATTSGDGTERPASRSASRPESRINQMKYPAPRLVERSSSQNVRSPRKARNIEADETTPPSKRSNSASTPKRSPMKPLTPSSKKKEKAIVDDDDDME.

The disordered stretch occupies residues 1-78 (MPPKTSAAPP…LFSLQLPSRP (78 aa)). Residues 26–36 (KPQKKTTKPVN) show a composition bias toward basic residues. The segment covering 37–59 (RHKEGSKDPEEELQRAVNEKFDG) has biased composition (basic and acidic residues). 121–128 (GPNGSGKS) contributes to the ATP binding site. A coiled-coil region spans residues 326 to 604 (MKLEQRRRQR…QNSSCSSSNK (279 aa)). Composition is skewed to basic and acidic residues over residues 396–407 (LSDLGTEETRRK) and 420–444 (AEAE…AERK). Disordered regions lie at residues 396–444 (LSDL…AERK) and 460–485 (KTAN…EEQK). Residues 619–734 (KSFHGRLGDL…GDSTQEAQRM (116 aa)) form the SMC hinge domain. 2 coiled-coil regions span residues 786-1058 (KAAE…KVNR) and 1144-1182 (EKIN…SIKA). Residues 1440–1459 (IQTTRDVTSRPQSKATTSGD) are compositionally biased toward polar residues. The segment at 1440–1549 (IQTTRDVTSR…AIVDDDDDME (110 aa)) is disordered. The span at 1460–1474 (GTERPASRSASRPES) shows a compositional bias: basic and acidic residues. Residues 1510–1523 (TPPSKRSNSASTPK) show a composition bias toward polar residues.

It belongs to the SMC family. SMC4 subfamily. Component of the condensin I complex, which contains the mix-1/SMC2 and smc-4/SMC4 heterodimer, and three non SMC subunits that probably regulate the complex: dpy-26, capg-1 and dpy-28. Within the complex, interacts with mix-1, dpy-26, capg-1 and dpy-28. Component of the condensin II complex, which contains the mix-1/SMC2 and smc-4/SMC4 heterodimer, and three non SMC subunits, kle-2, capg-2 and hcp-6 that probably regulate the complex. Within the complex, interacts with mix-1, kle-2, capg-2 and hcp-6. Interacts with smcl-1.

The protein localises to the nucleus. The protein resides in the chromosome. Functionally, central component of the condensin I complex, a complex required for conversion of interphase chromatin into mitotic-like condense chromosomes. The condensin I complex introduces positive supercoils into relaxed DNA in the presence of type I topoisomerases. Converts nicked DNA into positive knotted forms in the presence of type II topoisomerases. Also a central component of the condensin II complex, a complex that seems to play a role in prophase chromosome condensation. Both the condensin complex I and II play a role in meiotic and mitotic chromosome segregation. Plays a role in robust cytokinesis upon the presence of chromatin obstructions. This chain is Structural maintenance of chromosomes protein 4 (smc-4), found in Caenorhabditis elegans.